The chain runs to 72 residues: Putative snRNP Sm-like protein (72 aa).

In terms of domain architecture, Sm spans 4-72 (RPLDILNDAL…RGDNVVYVSP (69 aa)).

The protein belongs to the snRNP Sm proteins family.

This Methanococcoides burtonii (strain DSM 6242 / NBRC 107633 / OCM 468 / ACE-M) protein is Putative snRNP Sm-like protein.